Here is a 414-residue protein sequence, read N- to C-terminus: Enterobactin exporter EntS (414 aa).

The Cytoplasmic portion of the chain corresponds to Met1 to Ala21. Residues Val22–Val42 traverse the membrane as a helical segment. Over Gln43–Gly55 the chain is Periplasmic. A helical membrane pass occupies residues Leu56–Ala76. Residues Asp77–Lys83 are Cytoplasmic-facing. The chain crosses the membrane as a helical span at residues Val84–Leu104. At Leu105 to Ser109 the chain is on the periplasmic side. Residues Leu110–Ala130 form a helical membrane-spanning segment. The Cytoplasmic segment spans residues Leu131–Arg156. The chain crosses the membrane as a helical span at residues Leu157 to Trp177. A topological domain (periplasmic) is located at residue Asn178. A helical transmembrane segment spans residues Tyr179 to Leu199. The Cytoplasmic segment spans residues Pro200–Arg218. The helical transmembrane segment at Phe219–Ala239 threads the bilayer. Residues Ser240 to Ser256 lie on the Periplasmic side of the membrane. Residues Ala257 to Thr277 traverse the membrane as a helical segment. Topologically, residues Ser278 to Pro287 are cytoplasmic. The chain crosses the membrane as a helical span at residues Gly288 to Ile307. Residues Met308–Ala313 are Periplasmic-facing. The helical transmembrane segment at Gly314 to Leu336 threads the bilayer. Residues Gln337–Asn356 lie on the Cytoplasmic side of the membrane. Residues Val357–Val377 traverse the membrane as a helical segment. Position 378 (Ala378) is a topological domain, periplasmic. The chain crosses the membrane as a helical span at residues Ser379–Gly399. At Glu400–Gly414 the chain is on the cytoplasmic side.

Belongs to the major facilitator superfamily. EntS (TC 2.A.1.38) family.

It is found in the cell inner membrane. Component of an export pathway for enterobactin. The sequence is that of Enterobactin exporter EntS from Salmonella choleraesuis (strain SC-B67).